The sequence spans 511 residues: 4,4'-diapophytoene desaturase (4,4'-diapolycopene-forming) (511 aa).

It belongs to the carotenoid/retinoid oxidoreductase family.

The enzyme catalyses 15-cis-4,4'-diapophytoene + 4 FAD + 4 H(+) = all-trans-4,4'-diapolycopene + 4 FADH2. It functions in the pathway carotenoid biosynthesis. In terms of biological role, involved in the biosynthesis of C30 carotenoids. Catalyzes four successive dehydrogenation reactions that lead to the introduction of four double bonds into 4,4'-diapophytoene (dehydrosqualene) to yield 4,4'-diapolycopene. The sequence is that of 4,4'-diapophytoene desaturase (4,4'-diapolycopene-forming) from Methylomonas sp.